The chain runs to 662 residues: MSENKFLPICKDDMIERGWEQCDFVLVTADAYIDHHSFGTAIISRVLENAGYKVGIIAQPDWKSVDDFKKLGRPRLGFLVNGGNMDPMVNHYTVSKKLRKKDLYTPKGEMGKRPDRATIVYCNKIREAYKDVNIVIGGIEASLRRFAHYDYWDNKVRKSILVDSGADLLVYGMSEKQIVEVADFLNQGFDGKYIRHIPGTCYIADSLDEIYEEHIVLPSFKDVSSDKRTYAECFKIQYDEQDPVRGRTLVQEHNGKYVVINKPEMPLSREELDRVYALPYQKTYHPIYEKDGGIAAIEEVKFSLVSSRGCSGNCSFCAITFHQGRIVTSRSEDSIVEEAEEITKYDDFKGYIHDIGGPTANFRKPACKKQLTLGACKHKRCMSPGICKNMEVDHREYLHLLRRVRKLPGIKKVFIRSGLRYDYIMADKDDTFFKELVEHHVSGQLKVAPEHVSPNVLKYMGKPAGKTYDEFRRKFFKITERLGKKQFIIPYLMSSHPGCKLEDAIMLAEYLRDINYQPEQVQDFYPTPGTLSTTMFYTELDPLTMEEVYIPRSKEEKAMQRALLQFKNPKNYNIVYDALVKAGREDLIGNGPKCLIRDKNSFGKGNNHSNHKSGGRKSRNENSGRRESEDKKRSSHSKKQRGNKSRGFDQKSQRVSKGKKRR.

The Radical SAM core domain occupies 296-567 (AIEEVKFSLV…AMQRALLQFK (272 aa)). [4Fe-4S] cluster contacts are provided by Cys-310, Cys-314, and Cys-317. Positions 597 to 662 (RDKNSFGKGN…QRVSKGKKRR (66 aa)) are disordered. Positions 618–632 (SRNENSGRRESEDKK) are enriched in basic and acidic residues. Positions 633 to 644 (RSSHSKKQRGNK) are enriched in basic residues.

The protein belongs to the UPF0313 family. Requires [4Fe-4S] cluster as cofactor.

In Clostridium perfringens (strain SM101 / Type A), this protein is UPF0313 protein CPR_1216.